We begin with the raw amino-acid sequence, 331 residues long: MDQCPIPTLLEHGNFSQVLFNNVEKFYAPRGDIMCYYTLTEKFIPRRKDWIGIFKVGWKTTQEYYTFMWAPLPKDQNKDSATQQEIQFKAYYLPKDVERYQFCYVDEDGLVRGTSVPFQFCPDPDEDIMVVINKEKVEEMEQLSEELYQQNQELKDKYADLHEQLQRKQVALEATQRVNKTLEHKVEEKASWEKEKASWEEEKASWEEEKASWEEEKASWEEEKASWEEEKASWEEEKASWEEEKASWEEEKASWEEEKASWEEEKASWEEEKASWEEEKASWEEEKASWEKEKASWEEEKASWEKEKAPWEVEKAPWKEVKAYWWNDLHR.

Residues 128–131 carry the CLIR motif; that stretch reads IMVV. A coiled-coil region spans residues 132–309; sequence INKEKVEEME…EKASWEKEKA (178 aa). Residues 189-310 form a disordered region; it reads KASWEKEKAS…KASWEKEKAP (122 aa). Residues 190–193 carry the LIR-like motif; sequence ASWE. The interaction with LGALS8 stretch occupies residues 292 to 302; it reads KEKASWEEEKA.

It belongs to the CALCOCO family. In terms of assembly, dimer. Part of a complex consisting of CALCOCO2, TAX1BP1 and MYO6. Interacts with MYO6. Interacts with GEMIN4. Interacts with ATG8 family members MAP1LC3A, MAP1LC3B, GABARAP, GABARAPL1 and GABARAPL2. Interacts with ATG8 family member MAP1LC3C. Interacts with LGALS8. Interacts with TOM1; the interaction is indirect and is mediated by MYO6, which acts as a bridge between TOM1 and CALCOCO2. Interacts with AZI2.

The protein localises to the cytoplasm. It is found in the perinuclear region. The protein resides in the cytoskeleton. Its subcellular location is the cytoplasmic vesicle. It localises to the autophagosome membrane. Functionally, xenophagy-specific receptor required for autophagy-mediated intracellular bacteria degradation. Acts as an effector protein of galectin-sensed membrane damage that restricts the proliferation of infecting pathogens upon entry into the cytosol by targeting LGALS8-associated bacteria for autophagy. Initially orchestrates bacteria targeting to autophagosomes and subsequently ensures pathogen degradation by regulating pathogen-containing autophagosome maturation. Bacteria targeting to autophagosomes relies on its interaction with MAP1LC3A, MAP1LC3B and/or GABARAPL2, whereas regulation of pathogen-containing autophagosome maturation requires the interaction with MAP3LC3C. May play a role in ruffle formation and actin cytoskeleton organization and seems to negatively regulate constitutive secretion. The protein is Calcium-binding and coiled-coil domain-containing protein 2 of Mus musculus (Mouse).